The sequence spans 344 residues: Protein RecA (344 aa).

Position 66 to 73 (66 to 73 (GPESSGKT)) interacts with ATP.

Belongs to the RecA family.

The protein localises to the cytoplasm. Functionally, can catalyze the hydrolysis of ATP in the presence of single-stranded DNA, the ATP-dependent uptake of single-stranded DNA by duplex DNA, and the ATP-dependent hybridization of homologous single-stranded DNAs. It interacts with LexA causing its activation and leading to its autocatalytic cleavage. The sequence is that of Protein RecA from Methylobacillus flagellatus (strain ATCC 51484 / DSM 6875 / VKM B-1610 / KT).